A 487-amino-acid chain; its full sequence is Glutamyl-tRNA(Gln) amidotransferase subunit A (487 aa).

Residues K80 and S155 each act as charge relay system in the active site. The active-site Acyl-ester intermediate is S179.

This sequence belongs to the amidase family. GatA subfamily. As to quaternary structure, heterotrimer of A, B and C subunits.

The catalysed reaction is L-glutamyl-tRNA(Gln) + L-glutamine + ATP + H2O = L-glutaminyl-tRNA(Gln) + L-glutamate + ADP + phosphate + H(+). Allows the formation of correctly charged Gln-tRNA(Gln) through the transamidation of misacylated Glu-tRNA(Gln) in organisms which lack glutaminyl-tRNA synthetase. The reaction takes place in the presence of glutamine and ATP through an activated gamma-phospho-Glu-tRNA(Gln). The chain is Glutamyl-tRNA(Gln) amidotransferase subunit A from Leptospira interrogans serogroup Icterohaemorrhagiae serovar copenhageni (strain Fiocruz L1-130).